Consider the following 349-residue polypeptide: Mediator of RNA polymerase II transcription subunit 19 (349 aa).

Over residues 1-28 (MSFHPQTPQSPSHFSPSSSDQSTSMSGS) the composition is skewed to low complexity. Disordered stretches follow at residues 1–81 (MSFH…EQKK) and 238–349 (AHLN…VSGI). The segment covering 29–53 (IVSTTTTLPTPAHSVNGSSLANDMS) has biased composition (polar residues). The span at 70–81 (TSDDVGDREQKK) shows a compositional bias: basic and acidic residues. Residues 330–341 (QSYAQARQQSSY) are compositionally biased toward low complexity.

This sequence belongs to the Mediator complex subunit 19 family. In terms of assembly, component of the Mediator complex.

It is found in the nucleus. In terms of biological role, component of the Mediator complex, a coactivator involved in the regulated transcription of nearly all RNA polymerase II-dependent genes. Mediator functions as a bridge to convey information from gene-specific regulatory proteins to the basal RNA polymerase II transcription machinery. Mediator is recruited to promoters by direct interactions with regulatory proteins and serves as a scaffold for the assembly of a functional preinitiation complex with RNA polymerase II and the general transcription factors. The protein is Mediator of RNA polymerase II transcription subunit 19 (rox3) of Neurospora crassa (strain ATCC 24698 / 74-OR23-1A / CBS 708.71 / DSM 1257 / FGSC 987).